The following is a 287-amino-acid chain: uncharacterized protein (287 aa).

Helical transmembrane passes span 7-28, 32-54, 67-86, 91-113, 120-139, 144-163, 170-192, 202-224, 231-253, and 263-280; these read LLLTVLAMLAFAGNSLLCRAAL, AIDAVSFTALRLFSGALMLAVLL, GWRGAAALFVYAAAFSYAYV, GTGALLLFGAVQVTLLLAGLLRG, ALLGFLLALGGLLFLLLPGA, LGGALLMLLSGLAWGLYTLL, PLAVSAGNFLRALAFAALLLLAF, GLAYALLSGALASGLGYAVWYSA, IQGASVQLSVPVLAALCGALLLG, and ATLAVLGGIALILAPRLG. 2 EamA domains span residues 15 to 136 and 155 to 276; these read LAFA…FLLL and LAWG…LILA.

The protein resides in the cell membrane. This is an uncharacterized protein from Pseudomonas aeruginosa (strain ATCC 15692 / DSM 22644 / CIP 104116 / JCM 14847 / LMG 12228 / 1C / PRS 101 / PAO1).